We begin with the raw amino-acid sequence, 390 residues long: Probable purine permease 7 (390 aa).

10 helical membrane passes run 42-62, 74-94, 110-130, 131-151, 169-189, 205-225, 244-264, 286-306, 312-332, and 341-361; these read WLRV…ATIL, TYVV…FRFF, SPSF…VSAY, AYLS…LILA, FTPL…LLVV, VIGF…LSLI, LAIY…FASG, TLAS…GLIF, FSNS…VIVF, and IFSI…HYLD.

It belongs to the purine permeases (TC 2.A.7.14) family.

The protein resides in the membrane. This is Probable purine permease 7 (PUP7) from Arabidopsis thaliana (Mouse-ear cress).